Reading from the N-terminus, the 156-residue chain is ATP synthase subunit b (156 aa).

The chain crosses the membrane as a helical span at residues 7–29 (LLGQAISFALFVWFCMKYVWPPL).

Belongs to the ATPase B chain family. In terms of assembly, F-type ATPases have 2 components, F(1) - the catalytic core - and F(0) - the membrane proton channel. F(1) has five subunits: alpha(3), beta(3), gamma(1), delta(1), epsilon(1). F(0) has three main subunits: a(1), b(2) and c(10-14). The alpha and beta chains form an alternating ring which encloses part of the gamma chain. F(1) is attached to F(0) by a central stalk formed by the gamma and epsilon chains, while a peripheral stalk is formed by the delta and b chains.

It localises to the cell inner membrane. F(1)F(0) ATP synthase produces ATP from ADP in the presence of a proton or sodium gradient. F-type ATPases consist of two structural domains, F(1) containing the extramembraneous catalytic core and F(0) containing the membrane proton channel, linked together by a central stalk and a peripheral stalk. During catalysis, ATP synthesis in the catalytic domain of F(1) is coupled via a rotary mechanism of the central stalk subunits to proton translocation. In terms of biological role, component of the F(0) channel, it forms part of the peripheral stalk, linking F(1) to F(0). This Vibrio alginolyticus protein is ATP synthase subunit b.